We begin with the raw amino-acid sequence, 479 residues long: Probable periplasmic serine endoprotease DegP-like (479 aa).

A signal peptide spans 1–27 (MSIPRLKSYLSMFAAVLMLGQVLSAQA). Active-site charge relay system residues include H117, D147, and S220. Substrate contacts are provided by residues 218–220 (GNS) and 275–279 (LGVVI). 2 consecutive PDZ domains span residues 264–355 (LKKD…IRNG) and 361–468 (DVTI…LRQG). A disordered region spans residues 368-395 (PDDDADIGTGTGADGSAERSSNRLGVSV).

This sequence belongs to the peptidase S1C family.

Its subcellular location is the periplasm. The catalysed reaction is Acts on substrates that are at least partially unfolded. The cleavage site P1 residue is normally between a pair of hydrophobic residues, such as Val-|-Val.. Might be efficient in the degradation of transiently denatured and unfolded proteins which accumulate in the periplasm following stress conditions. This is Probable periplasmic serine endoprotease DegP-like from Pseudomonas putida (strain W619).